The sequence spans 139 residues: Diuretic hormone 41 (139 aa).

Positions 1–20 are cleaved as a signal peptide; that stretch reads MMWWALWCAVVVAAGSGVAA. A propeptide spanning residues 21–79 is cleaved from the precursor; it reads APAPDSLSPLDMVQMDSSAPDDETLYAMSPMAARYSAGAPWLYLLADMPRDSQTGSGRV. Isoleucine 122 is subject to Isoleucine amide.

Belongs to the sauvagine/corticotropin-releasing factor/urotensin I family. As to expression, expressed in corpora cardiaca (CC), corpora allata (CA), antennal lobe (AL) and gnathal ganglion (GNG) (at protein level). Expression in CC and CA detected in all animals, in GNG in most animals, expression in AL detected in few animals (at protein level).

The protein localises to the secreted. Its function is as follows. Regulation of fluid secretion. The polypeptide is Diuretic hormone 41 (Agrotis ipsilon (Black cutworm moth)).